A 277-amino-acid chain; its full sequence is Large ribosomal subunit protein uL2c (277 aa).

The interval 226-249 (NPIDHPHGGGEGRAPIGREKPLTP) is disordered. A compositionally biased stretch (basic and acidic residues) spans 229–246 (DHPHGGGEGRAPIGREKP).

The protein belongs to the universal ribosomal protein uL2 family. In terms of assembly, part of the 50S ribosomal subunit.

The protein localises to the plastid. Its subcellular location is the chloroplast. The polypeptide is Large ribosomal subunit protein uL2c (rpl2) (Physcomitrium patens (Spreading-leaved earth moss)).